Reading from the N-terminus, the 293-residue chain is MAAADFPVIIVTGLSGAGKSTVLNVLEDLRYFTVDGLPASLAPQMVTILNREALSHYQGLVLGMDLRESNFVRNLEKSLERLQGMGVRPAVVFIEATPAVLNRRYATTRRPHPLESEGMGLEQALEQERLRLAPVRETADLVVDTSSYSIHDLRRVIQKKWSSIQGRIRSLRINIVTFGFKYGVPADADLVFDLRFLPNPYFVPDLRPLSGLDEPVAKYVLEAGHGETFLAKLLDFLHFLLPQYEAEGRYRLTIAIGCTGGRHRSVSVAEALLRALKKSDYAVSIEHRHMELG.

Residue 13–20 (GLSGAGKS) participates in ATP binding. 65–68 (DLRE) provides a ligand contact to GTP.

Belongs to the RapZ-like family.

Functionally, displays ATPase and GTPase activities. In Nitratidesulfovibrio vulgaris (strain DSM 19637 / Miyazaki F) (Desulfovibrio vulgaris), this protein is Nucleotide-binding protein DvMF_0424.